Here is a 503-residue protein sequence, read N- to C-terminus: Capsanthin/capsorubin synthase, chromoplastic (503 aa).

Residue 88–117 (VIIIGTGPAGLRLAEQVSSRHSVKVCCVDP) coordinates NAD(+).

Belongs to the lycopene cyclase family.

Its subcellular location is the plastid. It localises to the chromoplast. The catalysed reaction is all-trans-violaxanthin = all-trans-capsorubin. It carries out the reaction all-trans-antheraxanthin = all-trans-capsanthin. The protein operates within carotenoid biosynthesis; capsanthin biosynthesis; capsanthin from antheraxanthin: step 1/1. It functions in the pathway carotenoid biosynthesis; capsorubin biosynthesis; capsorubin from violaxanthin: step 1/1. Catalyzes the conversion of the ubiquitous 5,6-epoxycarotenoids, antheraxanthin and violaxanthin, into capsanthin and capsorubin, respectively. This chain is Capsanthin/capsorubin synthase, chromoplastic (CCS), found in Citrus sinensis (Sweet orange).